Consider the following 311-residue polypeptide: Probable manganese-dependent inorganic pyrophosphatase (311 aa).

Residues H9, D13, D15, D77, H99, and D151 each contribute to the Mn(2+) site.

The protein belongs to the PPase class C family. The cofactor is Mn(2+).

The protein localises to the cytoplasm. The catalysed reaction is diphosphate + H2O = 2 phosphate + H(+). The sequence is that of Probable manganese-dependent inorganic pyrophosphatase from Streptococcus equi subsp. zooepidemicus (strain H70).